We begin with the raw amino-acid sequence, 73 residues long: Translation initiation factor IF-1 (73 aa).

Residues 1–73 (MAKKEDTIVL…TKARVVYRHR (73 aa)) form the S1-like domain.

The protein belongs to the IF-1 family. In terms of assembly, component of the 30S ribosomal translation pre-initiation complex which assembles on the 30S ribosome in the order IF-2 and IF-3, IF-1 and N-formylmethionyl-tRNA(fMet); mRNA recruitment can occur at any time during PIC assembly.

Its subcellular location is the cytoplasm. Its function is as follows. One of the essential components for the initiation of protein synthesis. Stabilizes the binding of IF-2 and IF-3 on the 30S subunit to which N-formylmethionyl-tRNA(fMet) subsequently binds. Helps modulate mRNA selection, yielding the 30S pre-initiation complex (PIC). Upon addition of the 50S ribosomal subunit IF-1, IF-2 and IF-3 are released leaving the mature 70S translation initiation complex. The sequence is that of Translation initiation factor IF-1 from Chlamydia caviae (strain ATCC VR-813 / DSM 19441 / 03DC25 / GPIC) (Chlamydophila caviae).